Here is a 356-residue protein sequence, read N- to C-terminus: MATQRKIIHIDMDCFYAAIEMRENPALIGKPVAVGGSVEGRGVLTTCNYEARKFGLHSAMPTAQALKRCPNLILVPVNMPLYKAVSEQIHQIFRRYTDIVEPLSLDEAYLDVTDCRQCSGSATWIAQEIRDAIWNELHLTASAGIAPLKFLAKIVSDQNKPNGQFVISPENMTAFIYDLPLKKIPGVGKVTNEKLAQLGLHTCGDIQHSDKAFIYKTFGKFGQRLWEFSHAIDNRKIEANRPRKSLAVENTLPTDIWHLAEAEQIVDELFKKLVFRLQRNWGERSLQEFKKLAIKLKFGDFTQTTLERTTDGLSRERFIELLQQVWQRTNRRSVRLIGLSVHYPTEKVKKQLNLWE.

Residues 7–188 form the UmuC domain; it reads IIHIDMDCFY…LPLKKIPGVG (182 aa). 2 residues coordinate Mg(2+): Asp11 and Asp106. Glu107 is an active-site residue.

It belongs to the DNA polymerase type-Y family. In terms of assembly, monomer. It depends on Mg(2+) as a cofactor.

It is found in the cytoplasm. The enzyme catalyses DNA(n) + a 2'-deoxyribonucleoside 5'-triphosphate = DNA(n+1) + diphosphate. Its function is as follows. Poorly processive, error-prone DNA polymerase involved in untargeted mutagenesis. Copies undamaged DNA at stalled replication forks, which arise in vivo from mismatched or misaligned primer ends. These misaligned primers can be extended by PolIV. Exhibits no 3'-5' exonuclease (proofreading) activity. May be involved in translesional synthesis, in conjunction with the beta clamp from PolIII. This Actinobacillus pleuropneumoniae serotype 3 (strain JL03) protein is DNA polymerase IV.